The chain runs to 266 residues: Hydroxyethylthiazole kinase (266 aa).

Met46 contacts substrate. Residues Arg122 and Ser168 each contribute to the ATP site. Gly195 is a binding site for substrate.

Belongs to the Thz kinase family. Requires Mg(2+) as cofactor.

It carries out the reaction 5-(2-hydroxyethyl)-4-methylthiazole + ATP = 4-methyl-5-(2-phosphooxyethyl)-thiazole + ADP + H(+). It functions in the pathway cofactor biosynthesis; thiamine diphosphate biosynthesis; 4-methyl-5-(2-phosphoethyl)-thiazole from 5-(2-hydroxyethyl)-4-methylthiazole: step 1/1. Its function is as follows. Catalyzes the phosphorylation of the hydroxyl group of 4-methyl-5-beta-hydroxyethylthiazole (THZ). This is Hydroxyethylthiazole kinase from Oleidesulfovibrio alaskensis (strain ATCC BAA-1058 / DSM 17464 / G20) (Desulfovibrio alaskensis).